We begin with the raw amino-acid sequence, 327 residues long: Phenylalanine--tRNA ligase alpha subunit (327 aa).

E252 is a binding site for Mg(2+).

The protein belongs to the class-II aminoacyl-tRNA synthetase family. Phe-tRNA synthetase alpha subunit type 1 subfamily. As to quaternary structure, tetramer of two alpha and two beta subunits. It depends on Mg(2+) as a cofactor.

The protein localises to the cytoplasm. The enzyme catalyses tRNA(Phe) + L-phenylalanine + ATP = L-phenylalanyl-tRNA(Phe) + AMP + diphosphate + H(+). The sequence is that of Phenylalanine--tRNA ligase alpha subunit from Salmonella agona (strain SL483).